A 244-amino-acid polypeptide reads, in one-letter code: 5-oxoprolinase subunit A (244 aa).

The protein belongs to the LamB/PxpA family. Forms a complex composed of PxpA, PxpB and PxpC.

It carries out the reaction 5-oxo-L-proline + ATP + 2 H2O = L-glutamate + ADP + phosphate + H(+). Functionally, catalyzes the cleavage of 5-oxoproline to form L-glutamate coupled to the hydrolysis of ATP to ADP and inorganic phosphate. The chain is 5-oxoprolinase subunit A from Salmonella typhi.